The following is a 258-amino-acid chain: Probable F-box protein At2g29610 (258 aa).

Positions 1–25 (MVELSEIPGDPNGADPNNNPQEEDE) are disordered. Low complexity predominate over residues 8–20 (PGDPNGADPNNNP). The F-box domain maps to 28–74 (LPILLQLPEELIERIIAHFPQCYSPSPILVCETFRQVINSDHFYYVT).

This chain is Probable F-box protein At2g29610, found in Arabidopsis thaliana (Mouse-ear cress).